Consider the following 429-residue polypeptide: Glutamyl-tRNA reductase (429 aa).

Substrate contacts are provided by residues 50–53, Ser110, 115–117, and Gln121; these read TCNR and ETQ. Cys51 (nucleophile) is an active-site residue. 190–195 lines the NADP(+) pocket; that stretch reads GAGEMA.

This sequence belongs to the glutamyl-tRNA reductase family. In terms of assembly, homodimer.

It catalyses the reaction (S)-4-amino-5-oxopentanoate + tRNA(Glu) + NADP(+) = L-glutamyl-tRNA(Glu) + NADPH + H(+). It functions in the pathway porphyrin-containing compound metabolism; protoporphyrin-IX biosynthesis; 5-aminolevulinate from L-glutamyl-tRNA(Glu): step 1/2. Catalyzes the NADPH-dependent reduction of glutamyl-tRNA(Glu) to glutamate 1-semialdehyde (GSA). In Campylobacter hominis (strain ATCC BAA-381 / DSM 21671 / CCUG 45161 / LMG 19568 / NCTC 13146 / CH001A), this protein is Glutamyl-tRNA reductase.